The chain runs to 327 residues: tRNA dimethylallyltransferase (327 aa).

14–21 (GPTASGKT) contributes to the ATP binding site. 16-21 (TASGKT) contributes to the substrate binding site. Interaction with substrate tRNA stretches follow at residues 39-42 (DSAL) and 163-167 (QRIQR).

The protein belongs to the IPP transferase family. As to quaternary structure, monomer. Mg(2+) serves as cofactor.

It catalyses the reaction adenosine(37) in tRNA + dimethylallyl diphosphate = N(6)-dimethylallyladenosine(37) in tRNA + diphosphate. In terms of biological role, catalyzes the transfer of a dimethylallyl group onto the adenine at position 37 in tRNAs that read codons beginning with uridine, leading to the formation of N6-(dimethylallyl)adenosine (i(6)A). This Xanthomonas oryzae pv. oryzae (strain PXO99A) protein is tRNA dimethylallyltransferase.